The sequence spans 210 residues: Keratin-associated protein 26-1 (210 aa).

This sequence belongs to the PMG family. Interacts with hair keratins. As to expression, localized high up in the well differentiated portion of the hair follicle cuticle (about 10-15 cell layers above the apex of the dermal papilla).

Functionally, in the hair cortex, hair keratin intermediate filaments are embedded in an interfilamentous matrix, consisting of hair keratin-associated proteins (KRTAP), which are essential for the formation of a rigid and resistant hair shaft through their extensive disulfide bond cross-linking with abundant cysteine residues of hair keratins. The matrix proteins include the high-sulfur and high-glycine-tyrosine keratins. This Homo sapiens (Human) protein is Keratin-associated protein 26-1 (KRTAP26-1).